The chain runs to 230 residues: UPF0173 metal-dependent hydrolase LI0883 (230 aa).

This sequence belongs to the UPF0173 family.

The protein is UPF0173 metal-dependent hydrolase LI0883 of Lawsonia intracellularis (strain PHE/MN1-00).